An 821-amino-acid chain; its full sequence is Leucine--tRNA ligase (821 aa).

The short motif at Pro-44–His-54 is the 'HIGH' region element. A 'KMSKS' region motif is present at residues Lys-589 to Ser-593. Lys-592 contributes to the ATP binding site.

It belongs to the class-I aminoacyl-tRNA synthetase family.

The protein localises to the cytoplasm. It catalyses the reaction tRNA(Leu) + L-leucine + ATP = L-leucyl-tRNA(Leu) + AMP + diphosphate. In Campylobacter curvus (strain 525.92), this protein is Leucine--tRNA ligase.